We begin with the raw amino-acid sequence, 207 residues long: MKTKILSLANEEVGEISLNEDIFAVEFIRDDIIKQVIDWQRAKAMSGNHKTKTVSEVSGTTKKPFKQKGTGNARQGSLRSVQMRGGGVAHGPRVRSHATKLPKKVRKLGLIHALSEKFAEGKLLVIDSLKLDKPKTSVLVNILNKFQGKSFFVIDGNEVDTNFSLAAKNIYNTVIVPQIGANVYDIIRHEYVLLSQEAVSVLEERLR.

The disordered stretch occupies residues K50 to Q75.

It belongs to the universal ribosomal protein uL4 family. Part of the 50S ribosomal subunit.

One of the primary rRNA binding proteins, this protein initially binds near the 5'-end of the 23S rRNA. It is important during the early stages of 50S assembly. It makes multiple contacts with different domains of the 23S rRNA in the assembled 50S subunit and ribosome. Functionally, forms part of the polypeptide exit tunnel. The chain is Large ribosomal subunit protein uL4 from Rickettsia felis (strain ATCC VR-1525 / URRWXCal2) (Rickettsia azadi).